Reading from the N-terminus, the 262-residue chain is Ribosomal RNA small subunit methyltransferase A (262 aa).

Residues N12, L14, G38, E60, D83, and N102 each coordinate S-adenosyl-L-methionine.

The protein belongs to the class I-like SAM-binding methyltransferase superfamily. rRNA adenine N(6)-methyltransferase family. RsmA subfamily.

It localises to the cytoplasm. It catalyses the reaction adenosine(1518)/adenosine(1519) in 16S rRNA + 4 S-adenosyl-L-methionine = N(6)-dimethyladenosine(1518)/N(6)-dimethyladenosine(1519) in 16S rRNA + 4 S-adenosyl-L-homocysteine + 4 H(+). Specifically dimethylates two adjacent adenosines (A1518 and A1519) in the loop of a conserved hairpin near the 3'-end of 16S rRNA in the 30S particle. May play a critical role in biogenesis of 30S subunits. This Pelagibacter ubique (strain HTCC1062) protein is Ribosomal RNA small subunit methyltransferase A.